The following is an 884-amino-acid chain: Alanine--tRNA ligase (884 aa).

Residues H565, H569, C672, and H676 each coordinate Zn(2+).

Belongs to the class-II aminoacyl-tRNA synthetase family. It depends on Zn(2+) as a cofactor.

The protein localises to the cytoplasm. The catalysed reaction is tRNA(Ala) + L-alanine + ATP = L-alanyl-tRNA(Ala) + AMP + diphosphate. Functionally, catalyzes the attachment of alanine to tRNA(Ala) in a two-step reaction: alanine is first activated by ATP to form Ala-AMP and then transferred to the acceptor end of tRNA(Ala). Also edits incorrectly charged Ser-tRNA(Ala) and Gly-tRNA(Ala) via its editing domain. The polypeptide is Alanine--tRNA ligase (Sphingopyxis alaskensis (strain DSM 13593 / LMG 18877 / RB2256) (Sphingomonas alaskensis)).